The primary structure comprises 344 residues: tRNA N6-adenosine threonylcarbamoyltransferase (344 aa).

Fe cation contacts are provided by His112 and His116. Substrate is bound by residues 134–138, Asp167, Gly180, and Asn280; that span reads LASGG. Fe cation is bound at residue Asp308.

The protein belongs to the KAE1 / TsaD family. Requires Fe(2+) as cofactor.

It localises to the cytoplasm. It carries out the reaction L-threonylcarbamoyladenylate + adenosine(37) in tRNA = N(6)-L-threonylcarbamoyladenosine(37) in tRNA + AMP + H(+). Required for the formation of a threonylcarbamoyl group on adenosine at position 37 (t(6)A37) in tRNAs that read codons beginning with adenine. Is involved in the transfer of the threonylcarbamoyl moiety of threonylcarbamoyl-AMP (TC-AMP) to the N6 group of A37, together with TsaE and TsaB. TsaD likely plays a direct catalytic role in this reaction. This Rickettsia conorii (strain ATCC VR-613 / Malish 7) protein is tRNA N6-adenosine threonylcarbamoyltransferase.